The sequence spans 492 residues: N-succinylglutamate 5-semialdehyde dehydrogenase (492 aa).

NAD(+) is bound at residue 220 to 225 (GSASTG). Catalysis depends on residues Glu-243 and Cys-277.

The protein belongs to the aldehyde dehydrogenase family. AstD subfamily.

It catalyses the reaction N-succinyl-L-glutamate 5-semialdehyde + NAD(+) + H2O = N-succinyl-L-glutamate + NADH + 2 H(+). Its pathway is amino-acid degradation; L-arginine degradation via AST pathway; L-glutamate and succinate from L-arginine: step 4/5. Functionally, catalyzes the NAD-dependent reduction of succinylglutamate semialdehyde into succinylglutamate. The polypeptide is N-succinylglutamate 5-semialdehyde dehydrogenase (Salmonella schwarzengrund (strain CVM19633)).